The primary structure comprises 296 residues: tRNA dimethylallyltransferase (296 aa).

Residue 9–16 (GPTAVGKT) participates in ATP binding. 11 to 16 (TAVGKT) serves as a coordination point for substrate. The interaction with substrate tRNA stretch occupies residues 34-37 (DSRQ).

The protein belongs to the IPP transferase family. Monomer. Mg(2+) is required as a cofactor.

It catalyses the reaction adenosine(37) in tRNA + dimethylallyl diphosphate = N(6)-dimethylallyladenosine(37) in tRNA + diphosphate. Its function is as follows. Catalyzes the transfer of a dimethylallyl group onto the adenine at position 37 in tRNAs that read codons beginning with uridine, leading to the formation of N6-(dimethylallyl)adenosine (i(6)A). The sequence is that of tRNA dimethylallyltransferase from Chloroflexus aurantiacus (strain ATCC 29366 / DSM 635 / J-10-fl).